The sequence spans 204 residues: Large ribosomal subunit protein eL15 (204 aa).

It belongs to the eukaryotic ribosomal protein eL15 family. Component of the large ribosomal subunit.

The protein localises to the cytoplasm. Its function is as follows. Component of the large ribosomal subunit. The ribosome is a large ribonucleoprotein complex responsible for the synthesis of proteins in the cell. The polypeptide is Large ribosomal subunit protein eL15 (rpl15) (Megalobrama amblycephala (Chinese blunt snout bream)).